Reading from the N-terminus, the 349-residue chain is Hydroxymethylglutaryl-CoA synthase (349 aa).

Asp30 and Ala31 together coordinate (3S)-3-hydroxy-3-methylglutaryl-CoA. Residue Glu82 is the Proton donor/acceptor of the active site. Residues Cys114 and Thr155 each contribute to the (3S)-3-hydroxy-3-methylglutaryl-CoA site. The active-site Acyl-thioester intermediate is the Cys114. CoA is bound at residue Arg203. (3S)-3-hydroxy-3-methylglutaryl-CoA-binding residues include Thr205 and His238. His238 acts as the Proton donor/acceptor in catalysis. A CoA-binding site is contributed by Lys243. (3S)-3-hydroxy-3-methylglutaryl-CoA is bound by residues Asn270 and Ser300.

The protein belongs to the thiolase-like superfamily. Archaeal HMG-CoA synthase family. Interacts with acetoacetyl-CoA thiolase that catalyzes the precedent step in the pathway and with a DUF35 protein. The acetoacetyl-CoA thiolase/HMG-CoA synthase complex channels the intermediate via a fused CoA-binding site, which allows for efficient coupling of the endergonic thiolase reaction with the exergonic HMGCS reaction.

The enzyme catalyses acetoacetyl-CoA + acetyl-CoA + H2O = (3S)-3-hydroxy-3-methylglutaryl-CoA + CoA + H(+). The protein operates within metabolic intermediate biosynthesis; (R)-mevalonate biosynthesis; (R)-mevalonate from acetyl-CoA: step 2/3. In terms of biological role, catalyzes the condensation of acetyl-CoA with acetoacetyl-CoA to form 3-hydroxy-3-methylglutaryl-CoA (HMG-CoA). Functions in the mevalonate (MVA) pathway leading to isopentenyl diphosphate (IPP), a key precursor for the biosynthesis of isoprenoid compounds that are building blocks of archaeal membrane lipids. This is Hydroxymethylglutaryl-CoA synthase from Methanococcus maripaludis (strain C6 / ATCC BAA-1332).